The following is a 168-amino-acid chain: 6,7-dimethyl-8-ribityllumazine synthase (168 aa).

5-amino-6-(D-ribitylamino)uracil contacts are provided by residues F24, 58–60, and 82–84; these read ALE and AVI. Residue 87 to 88 participates in (2S)-2-hydroxy-3-oxobutyl phosphate binding; it reads ET. H90 (proton donor) is an active-site residue. N115 provides a ligand contact to 5-amino-6-(D-ribitylamino)uracil. R129 contacts (2S)-2-hydroxy-3-oxobutyl phosphate.

The protein belongs to the DMRL synthase family.

It catalyses the reaction (2S)-2-hydroxy-3-oxobutyl phosphate + 5-amino-6-(D-ribitylamino)uracil = 6,7-dimethyl-8-(1-D-ribityl)lumazine + phosphate + 2 H2O + H(+). Its pathway is cofactor biosynthesis; riboflavin biosynthesis; riboflavin from 2-hydroxy-3-oxobutyl phosphate and 5-amino-6-(D-ribitylamino)uracil: step 1/2. Catalyzes the formation of 6,7-dimethyl-8-ribityllumazine by condensation of 5-amino-6-(D-ribitylamino)uracil with 3,4-dihydroxy-2-butanone 4-phosphate. This is the penultimate step in the biosynthesis of riboflavin. In Paraburkholderia xenovorans (strain LB400), this protein is 6,7-dimethyl-8-ribityllumazine synthase.